Reading from the N-terminus, the 179-residue chain is Replication restart protein DnaT (179 aa).

Residues 151 to 168 (SRSSNGGMPQRDINSVSE) are compositionally biased toward polar residues. A disordered region spans residues 151–179 (SRSSNGGMPQRDINSVSEPDNHIPPGFRG).

It belongs to the DnaT family. Homooligomerizes. Interacts with PriB. Component of the replication restart primosome. Primosome assembly occurs via a 'hand-off' mechanism. PriA binds to replication forks, subsequently PriB then DnaT bind; DnaT then displaces ssDNA to generate the helicase loading substrate.

Involved in the restart of stalled replication forks, which reloads the replicative helicase on sites other than the origin of replication. Can function in multiple replication restart pathways. Displaces ssDNA from a PriB-ssDNA complex. Probably forms a spiral filament on ssDNA. This is Replication restart protein DnaT from Salmonella arizonae (strain ATCC BAA-731 / CDC346-86 / RSK2980).